Consider the following 344-residue polypeptide: Small ribosomal subunit biogenesis GTPase RsgA (344 aa).

In terms of domain architecture, CP-type G spans 100 to 268; the sequence is KNELSRPDYY…LIDSPGIREF (169 aa). GTP-binding positions include 156–159 and 210–218; these read NKID and GQSGVGKSS. The Zn(2+) site is built by Cys292, Cys297, His299, and Cys305.

This sequence belongs to the TRAFAC class YlqF/YawG GTPase family. RsgA subfamily. Monomer. Associates with 30S ribosomal subunit, binds 16S rRNA. The cofactor is Zn(2+).

The protein resides in the cytoplasm. Functionally, one of several proteins that assist in the late maturation steps of the functional core of the 30S ribosomal subunit. Helps release RbfA from mature subunits. May play a role in the assembly of ribosomal proteins into the subunit. Circularly permuted GTPase that catalyzes slow GTP hydrolysis, GTPase activity is stimulated by the 30S ribosomal subunit. The chain is Small ribosomal subunit biogenesis GTPase RsgA from Actinobacillus pleuropneumoniae serotype 5b (strain L20).